Reading from the N-terminus, the 79-residue chain is Acyl carrier protein (79 aa).

The Carrier domain occupies 2-77 (STIEERVKKI…QAIDYVKSHV (76 aa)). Serine 37 bears the O-(pantetheine 4'-phosphoryl)serine mark.

This sequence belongs to the acyl carrier protein (ACP) family. 4'-phosphopantetheine is transferred from CoA to a specific serine of apo-ACP by AcpS. This modification is essential for activity because fatty acids are bound in thioester linkage to the sulfhydryl of the prosthetic group.

Its subcellular location is the cytoplasm. The protein operates within lipid metabolism; fatty acid biosynthesis. In terms of biological role, carrier of the growing fatty acid chain in fatty acid biosynthesis. In Xanthomonas oryzae pv. oryzae (strain MAFF 311018), this protein is Acyl carrier protein.